A 446-amino-acid polypeptide reads, in one-letter code: Signal recognition particle 54 kDa protein (446 aa).

GTP is bound by residues 103–110, 185–189, and 245–248; these read GVQGTGKT, DTAGR, and TKMD.

The protein belongs to the GTP-binding SRP family. SRP54 subfamily. In terms of assembly, part of the signal recognition particle protein translocation system, which is composed of SRP and FtsY. Archaeal SRP consists of a 7S RNA molecule of 300 nucleotides and two protein subunits: SRP54 and SRP19.

Its subcellular location is the cytoplasm. It catalyses the reaction GTP + H2O = GDP + phosphate + H(+). Functionally, involved in targeting and insertion of nascent membrane proteins into the cytoplasmic membrane. Binds to the hydrophobic signal sequence of the ribosome-nascent chain (RNC) as it emerges from the ribosomes. The SRP-RNC complex is then targeted to the cytoplasmic membrane where it interacts with the SRP receptor FtsY. The polypeptide is Signal recognition particle 54 kDa protein (Metallosphaera sedula (strain ATCC 51363 / DSM 5348 / JCM 9185 / NBRC 15509 / TH2)).